Here is a 440-residue protein sequence, read N- to C-terminus: Ribulose bisphosphate carboxylase large chain (440 aa).

Lys4 carries the post-translational modification N6,N6,N6-trimethyllysine. Positions 113 and 163 each coordinate substrate. Lys165 acts as the Proton acceptor in catalysis. Lys167 is a binding site for substrate. Residues Lys191, Asp193, and Glu194 each coordinate Mg(2+). Position 191 is an N6-carboxylysine (Lys191). The active-site Proton acceptor is His284. Substrate-binding residues include Arg285, His317, and Ser369.

Belongs to the RuBisCO large chain family. Type I subfamily. As to quaternary structure, heterohexadecamer of 8 large chains and 8 small chains; disulfide-linked. The disulfide link is formed within the large subunit homodimers. Mg(2+) is required as a cofactor. In terms of processing, the disulfide bond which can form in the large chain dimeric partners within the hexadecamer appears to be associated with oxidative stress and protein turnover.

It localises to the plastid. The protein resides in the chloroplast. The catalysed reaction is 2 (2R)-3-phosphoglycerate + 2 H(+) = D-ribulose 1,5-bisphosphate + CO2 + H2O. It catalyses the reaction D-ribulose 1,5-bisphosphate + O2 = 2-phosphoglycolate + (2R)-3-phosphoglycerate + 2 H(+). Functionally, ruBisCO catalyzes two reactions: the carboxylation of D-ribulose 1,5-bisphosphate, the primary event in carbon dioxide fixation, as well as the oxidative fragmentation of the pentose substrate in the photorespiration process. Both reactions occur simultaneously and in competition at the same active site. In Ptychomitrium gardneri (Gardner's ptychomitrium moss), this protein is Ribulose bisphosphate carboxylase large chain.